A 1171-amino-acid chain; its full sequence is MYELNNFRSIKIALASPEKIRQWSKGEVKKPETINYRTLKPEKEGLFCEKIFGPTRDWECHCGKYKRVRYKGVVCDRCGVEVTKSKVRRERMGHIELAAPVSHIWYFKGIPSRMGLLLDMSPRSLEKVLYFAAYIVINPGETPLTEKQILTEKEYADAIEKYGPKFKAGMGAEAVKGLLESIDLDAMNIELRHKLKESTGQKRIRTVRRLEVVEAFRKSKNNPAWMILDVVPVIPPDLRPMVQLDGGRFATSDLNDLYRRVINRNNRLKRLLDLGAPDIIVRNEKRMLQEAVDALIDNGRRGKPVTGPGNRPLKSLSDMLKGKQGRFRQNLLGKRVDYSGRSVIVVGPELKFYQCGLPKQMALELFKPFVMKKLVQENYAHNIKSAKRMVEKVKPEVWGVLEEVISQHPVLLNRAPTLHRLGIQAFEPILVEGKAIKLHPLVCTAYNADFDGDQMAVHVPLSVEAQAESRFLMLSINNILAPKDGEPITTPTQDMVLGCYYLTIQDEGVLGEGTIFKDFEELLLAYETKAVSLHAKVKVRMKLSAEDSGKLVESTVGRFIFNEKIPQDLGFVDRSKDLYALEVDFLCTKGALGKVIGKCFRKHGNTITSIMLDYIKELGFKYSTRGAITVAVSDMDVPEAKAELISQAEQRVDKYEKAFRRGLISDEERYEKVIETWTETTEKVTDALMAGLDRFNNIFIMADSGARGSKNQIRQLGGMRGLMANASGHTVEIPIKSNFREGLTVLEYFTSTHGARKGLADTALRTADSGYLTRRLVDVSQDVIIRELDCGTETGIVAKAFKDGNEVIEELYFRIVGRHSIDDIIHPETKKVIVPKGDIIFEDAAETITEAGIEKVAIRSALACRSKHGVCGTCYGRNLATGEPVKVGEAVGIIAAQSIGEPGTQLTMRTFHTGGVAGSDITQGLPRVEELFEARKPKGLAIISEISGKVDISESKRKREVTVTDENQEVVTYTIPYGSRVKVKQGQILEPGDEITEGSVNPHDILRIKGVEGVQTYIIKEVQRVYRLQGVDINDKHIEVISRQMLSRIKVEEAGDTELLPGSLENVFAFELANQKAIEEGGEPATGNIALLGITKASLATDSFLSAASFQETTRVLTEAAIKGKEDHLIGLKENVIIGKLIPAGTGMKRYKNIAISTETDEKLDEIEETL.

Zn(2+) is bound by residues Cys-60, Cys-62, Cys-75, and Cys-78. The tract at residues 299–319 (GRRGKPVTGPGNRPLKSLSDM) is disordered. Mg(2+) is bound by residues Asp-449, Asp-451, and Asp-453. Zn(2+) contacts are provided by Cys-790, Cys-864, Cys-871, and Cys-874.

It belongs to the RNA polymerase beta' chain family. As to quaternary structure, the RNAP catalytic core consists of 2 alpha, 1 beta, 1 beta' and 1 omega subunit. When a sigma factor is associated with the core the holoenzyme is formed, which can initiate transcription. The cofactor is Mg(2+). Zn(2+) is required as a cofactor.

The enzyme catalyses RNA(n) + a ribonucleoside 5'-triphosphate = RNA(n+1) + diphosphate. Functionally, DNA-dependent RNA polymerase catalyzes the transcription of DNA into RNA using the four ribonucleoside triphosphates as substrates. The polypeptide is DNA-directed RNA polymerase subunit beta' (Alkaliphilus metalliredigens (strain QYMF)).